The chain runs to 451 residues: 2-succinylbenzoate--CoA ligase (451 aa).

Belongs to the ATP-dependent AMP-binding enzyme family. MenE subfamily.

It catalyses the reaction 2-succinylbenzoate + ATP + CoA = 2-succinylbenzoyl-CoA + AMP + diphosphate. It functions in the pathway quinol/quinone metabolism; 1,4-dihydroxy-2-naphthoate biosynthesis; 1,4-dihydroxy-2-naphthoate from chorismate: step 5/7. The protein operates within quinol/quinone metabolism; menaquinone biosynthesis. Converts 2-succinylbenzoate (OSB) to 2-succinylbenzoyl-CoA (OSB-CoA). In Escherichia coli (strain K12), this protein is 2-succinylbenzoate--CoA ligase.